A 347-amino-acid polypeptide reads, in one-letter code: sn-glycerol-3-phosphate import ATP-binding protein UgpC 1 (347 aa).

The ABC transporter domain maps to 4–234; it reads IELIDLKKNY…PETVFVAGFI (231 aa). Position 36–43 (36–43) interacts with ATP; that stretch reads GPSGCGKS.

It belongs to the ABC transporter superfamily. sn-glycerol-3-phosphate importer (TC 3.A.1.1.3) family. The complex is composed of two ATP-binding proteins (UgpC), two transmembrane proteins (UgpA and UgpE) and a solute-binding protein (UgpB).

It is found in the cell inner membrane. The catalysed reaction is sn-glycerol 3-phosphate(out) + ATP + H2O = sn-glycerol 3-phosphate(in) + ADP + phosphate + H(+). Part of the ABC transporter complex UgpBAEC involved in sn-glycerol-3-phosphate (G3P) import. Responsible for energy coupling to the transport system. This is sn-glycerol-3-phosphate import ATP-binding protein UgpC 1 from Rhizobium etli (strain ATCC 51251 / DSM 11541 / JCM 21823 / NBRC 15573 / CFN 42).